Here is a 245-residue protein sequence, read N- to C-terminus: Fibroblast growth factor 13 (245 aa).

Disordered regions lie at residues Met-1–Asn-37 and Thr-213–Thr-245. A mediates targeting to the nucleus region spans residues Met-1–Pro-62. Residues Phe-215–Thr-245 are compositionally biased toward polar residues.

The protein belongs to the heparin-binding growth factors family.

It localises to the cell projection. The protein localises to the filopodium. It is found in the growth cone. Its subcellular location is the dendrite. The protein resides in the cell membrane. It localises to the sarcolemma. The protein localises to the cytoplasm. Functionally, microtubule-binding protein which directly binds tubulin and is involved in both polymerization and stabilization of microtubules. Through its action on microtubules, may participate in the refinement of axons by negatively regulating axonal and leading processes branching. Plays a crucial role in neuron polarization and migration. Regulates voltage-gated sodium channel transport and function. Required for proper head development, it is involved in neural differentiation through regulation of the mek5-erk5 pathway. This chain is Fibroblast growth factor 13 (fgf13), found in Xenopus laevis (African clawed frog).